The primary structure comprises 432 residues: Adenylosuccinate synthetase (432 aa).

Residues 11-17 (GDEGKGK) and 39-41 (GHT) contribute to the GTP site. Residue aspartate 12 is the Proton acceptor of the active site. Residues aspartate 12 and glycine 39 each coordinate Mg(2+). IMP-binding positions include 12 to 15 (DEGK), 37 to 40 (NAGH), threonine 134, arginine 148, asparagine 230, threonine 245, and arginine 309. Residue histidine 40 is the Proton donor of the active site. 305 to 311 (VTTGRKR) lines the substrate pocket. GTP contacts are provided by residues arginine 311, 337–339 (KLD), and 419–421 (GTG).

This sequence belongs to the adenylosuccinate synthetase family. In terms of assembly, homodimer. Mg(2+) serves as cofactor.

The protein localises to the cytoplasm. It catalyses the reaction IMP + L-aspartate + GTP = N(6)-(1,2-dicarboxyethyl)-AMP + GDP + phosphate + 2 H(+). Its pathway is purine metabolism; AMP biosynthesis via de novo pathway; AMP from IMP: step 1/2. Its function is as follows. Plays an important role in the de novo pathway and in the salvage pathway of purine nucleotide biosynthesis. Catalyzes the first committed step in the biosynthesis of AMP from IMP. The sequence is that of Adenylosuccinate synthetase from Candida glabrata (strain ATCC 2001 / BCRC 20586 / JCM 3761 / NBRC 0622 / NRRL Y-65 / CBS 138) (Yeast).